Here is a 459-residue protein sequence, read N- to C-terminus: UDP-glycosyltransferase 78D3 (459 aa).

UDP-alpha-D-glucose contacts are provided by residues 338–340 (APQ), 355–363 (HGGWNSVLE), and 377–380 (FGDH).

It belongs to the UDP-glycosyltransferase family.

Functionally, possesses low quercetin 3-O-glucosyltransferase activity in vitro. The polypeptide is UDP-glycosyltransferase 78D3 (UGT78D3) (Arabidopsis thaliana (Mouse-ear cress)).